Here is a 400-residue protein sequence, read N- to C-terminus: Spermatogenic leucine zipper protein 1 (400 aa).

The tract at residues 1–27 (MADSDSSSEMPAHSPSPSPIPCAKQKP) is disordered. At S106 the chain carries Phosphoserine. Residues 116–127 (RNKLRFKDDLFI) are helix-loop-helix motif. Residues 128 to 193 (HFDPERENTM…HIRGEYRKLR (66 aa)) are basic motif. Coiled coils occupy residues 182–231 (SVHI…KDIV) and 268–293 (LIAA…LHLH). Phosphoserine is present on S207. A leucine-zipper region spans residues 252 to 273 (LEEQVKKLSQDTHSLHLIAALL). The disordered stretch occupies residues 295–332 (AGPGHEKPLQTSGEQDKKCGEQDKKCGEQDKKCGEQDK).

As to quaternary structure, interacts with PPP1CC isoform gamma-2. Phosphorylated by MAPK1/ERK2 and MAPK3/ERK1.

Its subcellular location is the cytoplasm. It localises to the nucleus. In terms of biological role, transcription factor that binds to the DNA sequence 5'-CANNTG-3'(E box) and the G-box motif. May play an important role in the regulation of cell proliferation and differentiation during spermatogenesis. The sequence is that of Spermatogenic leucine zipper protein 1 (Spz1) from Rattus norvegicus (Rat).